The sequence spans 556 residues: Formate--tetrahydrofolate ligase (556 aa).

65–72 contributes to the ATP binding site; it reads TPAGEGKT.

It belongs to the formate--tetrahydrofolate ligase family.

It catalyses the reaction (6S)-5,6,7,8-tetrahydrofolate + formate + ATP = (6R)-10-formyltetrahydrofolate + ADP + phosphate. It functions in the pathway one-carbon metabolism; tetrahydrofolate interconversion. The chain is Formate--tetrahydrofolate ligase from Heliobacterium modesticaldum (strain ATCC 51547 / Ice1).